The primary structure comprises 472 residues: Probable diguanylate cyclase DgcF (472 aa).

8 consecutive transmembrane segments (helical) span residues 21–41 (SIAI…LRLV), 44–64 (LSLF…YVWL), 90–110 (VSLA…LLVV), 128–148 (LFNY…IGSV), 167–187 (FSTG…GVLP), 198–218 (IALI…SLAF), 237–257 (LLTF…VIDI), and 273–293 (LGIA…AAIN). One can recognise a GGDEF domain in the interval 330 to 467 (QHLTVMLLDI…GRNRTSTMRY (138 aa)). Mg(2+) is bound by residues Asp338 and Ile339. Substrate-binding residues include Asn346, His351, and Asp355. Glu381 provides a ligand contact to Mg(2+).

In terms of assembly, homodimer. Requires Mg(2+) as cofactor.

It is found in the cell membrane. The catalysed reaction is 2 GTP = 3',3'-c-di-GMP + 2 diphosphate. It participates in purine metabolism; 3',5'-cyclic di-GMP biosynthesis. In terms of biological role, catalyzes the synthesis of cyclic-di-GMP (c-di-GMP) via the condensation of 2 GTP molecules. This Escherichia coli O157:H7 protein is Probable diguanylate cyclase DgcF.